We begin with the raw amino-acid sequence, 636 residues long: PTS system beta-glucoside-specific EIIBCA component (636 aa).

The region spanning 1 to 86 is the PTS EIIB type-1 domain; it reads MKYEQLAKDI…VEIGGFQNQA (86 aa). Cys26 functions as the Phosphocysteine intermediate; for EIIB activity in the catalytic mechanism. Transmembrane regions (helical) follow at residues 104–124, 146–166, 172–192, 215–235, 258–278, 299–319, 337–357, 369–389, 407–427, and 444–464; these read IDIIASIFTPVLGVLAATGMI, LLHAIGDSLFYFFPIFLGYTA, ATPFIGMAIGASLVYPTLVVL, FLGIPVILMSYATSVIPIILA, LVPFFTLLIVVPLTFIVIGPI, IIAGAFLGGFWQVFVIFGLHW, VLAMVFAASFAQIGAVAAVWL, VPAFISGIFGVTEPAIYGVTL, AIIGLFRSQGYIIGGLGIFGI, and IVIAVVVAFVLGFILTYLFGL. The PTS EIIC type-1 domain occupies 105-476; it reads DIIASIFTPV…GNASDEQTET (372 aa). The interval 472–492 is disordered; the sequence is EQTETKAHTSTGTGEKEEISS. Residues 506 to 610 form the PTS EIIA type-1 domain; it reads DEAFSSGALG…AVTTPVIVTN (105 aa). The active-site Tele-phosphohistidine intermediate; for EIIA activity is His558.

It localises to the cell membrane. Functionally, the phosphoenolpyruvate-dependent sugar phosphotransferase system (sugar PTS), a major carbohydrate active -transport system, catalyzes the phosphorylation of incoming sugar substrates concomitantly with their translocation across the cell membrane. This system is involved in beta-glucoside transport. This chain is PTS system beta-glucoside-specific EIIBCA component (bglP), found in Halalkalibacterium halodurans (strain ATCC BAA-125 / DSM 18197 / FERM 7344 / JCM 9153 / C-125) (Bacillus halodurans).